We begin with the raw amino-acid sequence, 219 residues long: Large ribosomal subunit protein uL1 (219 aa).

It belongs to the universal ribosomal protein uL1 family. As to quaternary structure, part of the 50S ribosomal subunit.

In terms of biological role, binds directly to 23S rRNA. Probably involved in E site tRNA release. Its function is as follows. Protein L1 is also a translational repressor protein, it controls the translation of its operon by binding to its mRNA. This chain is Large ribosomal subunit protein uL1, found in Pyrococcus horikoshii (strain ATCC 700860 / DSM 12428 / JCM 9974 / NBRC 100139 / OT-3).